A 294-amino-acid chain; its full sequence is NAD kinase (294 aa).

Asp73 acts as the Proton acceptor in catalysis. NAD(+) contacts are provided by residues 73–74 (DG), 147–148 (ND), Arg175, Asp177, and 188–193 (TAYALS).

It belongs to the NAD kinase family. A divalent metal cation is required as a cofactor.

The protein localises to the cytoplasm. The enzyme catalyses NAD(+) + ATP = ADP + NADP(+) + H(+). Its function is as follows. Involved in the regulation of the intracellular balance of NAD and NADP, and is a key enzyme in the biosynthesis of NADP. Catalyzes specifically the phosphorylation on 2'-hydroxyl of the adenosine moiety of NAD to yield NADP. This is NAD kinase from Nitrosospira multiformis (strain ATCC 25196 / NCIMB 11849 / C 71).